Here is a 328-residue protein sequence, read N- to C-terminus: Biotin synthase (328 aa).

One can recognise a Radical SAM core domain in the interval 48-277 (FVGNEVHLCS…GKRITVCGGR (230 aa)). Residues C66, C70, and C73 each contribute to the [4Fe-4S] cluster site. The [2Fe-2S] cluster site is built by S142 and C202.

The protein belongs to the radical SAM superfamily. Biotin synthase family. In terms of assembly, homodimer. [4Fe-4S] cluster is required as a cofactor. Requires [2Fe-2S] cluster as cofactor.

The enzyme catalyses (4R,5S)-dethiobiotin + (sulfur carrier)-SH + 2 reduced [2Fe-2S]-[ferredoxin] + 2 S-adenosyl-L-methionine = (sulfur carrier)-H + biotin + 2 5'-deoxyadenosine + 2 L-methionine + 2 oxidized [2Fe-2S]-[ferredoxin]. It participates in cofactor biosynthesis; biotin biosynthesis; biotin from 7,8-diaminononanoate: step 2/2. Catalyzes the conversion of dethiobiotin (DTB) to biotin by the insertion of a sulfur atom into dethiobiotin via a radical-based mechanism. This is Biotin synthase from Citrifermentans bemidjiense (strain ATCC BAA-1014 / DSM 16622 / JCM 12645 / Bem) (Geobacter bemidjiensis).